The chain runs to 363 residues: Peptide chain release factor 1 (363 aa).

Position 237 is an N5-methylglutamine (Gln-237).

It belongs to the prokaryotic/mitochondrial release factor family. Post-translationally, methylated by PrmC. Methylation increases the termination efficiency of RF1.

It is found in the cytoplasm. Peptide chain release factor 1 directs the termination of translation in response to the peptide chain termination codons UAG and UAA. This chain is Peptide chain release factor 1 (prfA), found in Mycoplasma capricolum subsp. capricolum (strain California kid / ATCC 27343 / NCTC 10154).